Consider the following 271-residue polypeptide: Ribosomal RNA small subunit methyltransferase A (271 aa).

The S-adenosyl-L-methionine site is built by H11, L13, G38, E59, D84, and N109.

Belongs to the class I-like SAM-binding methyltransferase superfamily. rRNA adenine N(6)-methyltransferase family. RsmA subfamily.

The protein localises to the cytoplasm. It catalyses the reaction adenosine(1518)/adenosine(1519) in 16S rRNA + 4 S-adenosyl-L-methionine = N(6)-dimethyladenosine(1518)/N(6)-dimethyladenosine(1519) in 16S rRNA + 4 S-adenosyl-L-homocysteine + 4 H(+). Functionally, specifically dimethylates two adjacent adenosines (A1518 and A1519) in the loop of a conserved hairpin near the 3'-end of 16S rRNA in the 30S particle. May play a critical role in biogenesis of 30S subunits. This chain is Ribosomal RNA small subunit methyltransferase A, found in Nostoc sp. (strain PCC 7120 / SAG 25.82 / UTEX 2576).